We begin with the raw amino-acid sequence, 279 residues long: Urease accessory protein UreD (279 aa).

Belongs to the UreD family. In terms of assembly, ureD, UreF and UreG form a complex that acts as a GTP-hydrolysis-dependent molecular chaperone, activating the urease apoprotein by helping to assemble the nickel containing metallocenter of UreC. The UreE protein probably delivers the nickel.

It localises to the cytoplasm. Required for maturation of urease via the functional incorporation of the urease nickel metallocenter. This is Urease accessory protein UreD from Rhodopseudomonas palustris (strain HaA2).